We begin with the raw amino-acid sequence, 623 residues long: Quinoprotein ethanol dehydrogenase (623 aa).

Positions 1-34 are cleaved as a signal peptide; it reads MTTRTSPAPAGLLRPSLHCLAFAVALGSAGAALA. D45, T48, and D51 together coordinate Ca(2+). A pyrroloquinoline quinone-binding site is contributed by E95. An intrachain disulfide couples C139 to C140. Pyrroloquinoline quinone contacts are provided by residues R145, T189, and 207–209; that span reads HGS. A Ca(2+)-binding site is contributed by E213. The disordered stretch occupies residues 244–281; that stretch reads LNGKDSTVTGDVKAPSWPDDRNSPTGKVESWSHGGGAP. Residues N300 and D350 each coordinate Ca(2+). D350 serves as the catalytic Proton acceptor. Residue R378 coordinates pyrroloquinoline quinone. Residues 413 to 434 are disordered; sequence GRPVEREGQRPPLPEPGQKHGK. 2 residues coordinate pyrroloquinoline quinone: W523 and A587.

The protein belongs to the bacterial PQQ dehydrogenase family. Homodimer. Interacts with cytochrome c550. Pyrroloquinoline quinone serves as cofactor. The cofactor is Ca(2+). The disulfide ring formed between the two adjacent cysteine residues Cys-139 and Cys-140 is essential for efficient electron transfer at pH 7 from QEDH to its natural electron acceptor cytochrome c550.

The protein localises to the periplasm. The enzyme catalyses a primary alcohol + 2 Fe(III)-[cytochrome c] = an aldehyde + 2 Fe(II)-[cytochrome c] + 2 H(+). It catalyses the reaction ethanol + 2 Fe(III)-[cytochrome c] = acetaldehyde + 2 Fe(II)-[cytochrome c] + 2 H(+). It carries out the reaction butan-1-ol + 2 Fe(III)-[cytochrome c] = butanal + 2 Fe(II)-[cytochrome c] + 2 H(+). The catalysed reaction is propan-2-ol + 2 Fe(III)-[cytochrome c] = acetone + 2 Fe(II)-[cytochrome c] + 2 H(+). The enzyme catalyses 1-propanol + 2 Fe(III)-[cytochrome c] = propanal + 2 Fe(II)-[cytochrome c] + 2 H(+). Its pathway is alcohol metabolism; ethanol degradation; acetate from ethanol: step 1/2. With respect to regulation, inhibited by cyclopropanone ethylhemiketal. Activated by ammonia (500mM), methylamine (5mM), ethylamine (5mM), octylamine (5mM), ethanolamine (5mM) and 1-amino-2-propanol (5mM), in assays using artificial electron acceptors. Ammonia is not needed for, nor does it stimulate, the ethanol-oxidizing activity when using the natural electron acceptor cytochrome c550. Its function is as follows. Catalyzes the oxidation of ethanol and other primary alcohols to the corresponding aldehydes, except methanol, which is a very poor substrate. Uses a specific inducible cytochrome c550, encoded by the adjacent gene in the locus, as electron acceptor. Is a key enzyme of the carbon and energy metabolism during growth of P.aeruginosa on ethanol as the sole carbon and energy source. Is also able to use secondary alcohols as well as aminoalcohols like ethanolamine and 1-amino-2-propanol, and aldehydes as substrates. The polypeptide is Quinoprotein ethanol dehydrogenase (Pseudomonas aeruginosa (strain ATCC 15692 / DSM 22644 / CIP 104116 / JCM 14847 / LMG 12228 / 1C / PRS 101 / PAO1)).